The sequence spans 160 residues: Large ribosomal subunit protein uL15 (160 aa).

Basic and acidic residues predominate over residues 1–13 (MKLNEIRDNEGAR). The disordered stretch occupies residues 1 to 41 (MKLNEIRDNEGARKSRIRVGRGIGSGKGKTGGRGVKGQKSR). Residues 21–35 (RGIGSGKGKTGGRGV) are compositionally biased toward gly residues.

The protein belongs to the universal ribosomal protein uL15 family. Part of the 50S ribosomal subunit.

Functionally, binds to the 23S rRNA. The polypeptide is Large ribosomal subunit protein uL15 (Parvibaculum lavamentivorans (strain DS-1 / DSM 13023 / NCIMB 13966)).